The sequence spans 89 residues: Small ribosomal subunit protein uS15 (89 aa).

It belongs to the universal ribosomal protein uS15 family. In terms of assembly, part of the 30S ribosomal subunit. Forms a bridge to the 50S subunit in the 70S ribosome, contacting the 23S rRNA.

In terms of biological role, one of the primary rRNA binding proteins, it binds directly to 16S rRNA where it helps nucleate assembly of the platform of the 30S subunit by binding and bridging several RNA helices of the 16S rRNA. Its function is as follows. Forms an intersubunit bridge (bridge B4) with the 23S rRNA of the 50S subunit in the ribosome. In Bacillus anthracis (strain CDC 684 / NRRL 3495), this protein is Small ribosomal subunit protein uS15.